The sequence spans 500 residues: NAD(P)H-quinone oxidoreductase chain 4, chloroplastic (500 aa).

15 helical membrane-spanning segments follow: residues 4 to 24, 35 to 55, 80 to 100, 113 to 130, 134 to 154, 167 to 187, 208 to 228, 242 to 262, 274 to 294, 305 to 325, 330 to 350, 364 to 384, 386 to 406, 416 to 436, and 462 to 482; these read FYWL…IALL, YTIC…CYHF, LGID…TTLA, LFHF…GSFS, LLLF…LLSM, FILY…GMGL, ALEI…SPII, HYST…YGLV, SIFS…AALT, IAYS…SITD, GAIL…FLAG, MGGI…FSMA, LALP…GIIT, ILIT…SLSM, and IFIF…PDFV.

The protein belongs to the complex I subunit 4 family.

The protein localises to the plastid. Its subcellular location is the chloroplast thylakoid membrane. It catalyses the reaction a plastoquinone + NADH + (n+1) H(+)(in) = a plastoquinol + NAD(+) + n H(+)(out). The enzyme catalyses a plastoquinone + NADPH + (n+1) H(+)(in) = a plastoquinol + NADP(+) + n H(+)(out). The chain is NAD(P)H-quinone oxidoreductase chain 4, chloroplastic from Nymphaea alba (White water-lily).